Reading from the N-terminus, the 169-residue chain is S-ribosylhomocysteine lyase (169 aa).

3 residues coordinate Fe cation: H54, H58, and C128.

It belongs to the LuxS family. In terms of assembly, homodimer. The cofactor is Fe cation.

The catalysed reaction is S-(5-deoxy-D-ribos-5-yl)-L-homocysteine = (S)-4,5-dihydroxypentane-2,3-dione + L-homocysteine. Involved in the synthesis of autoinducer 2 (AI-2) which is secreted by bacteria and is used to communicate both the cell density and the metabolic potential of the environment. The regulation of gene expression in response to changes in cell density is called quorum sensing. Catalyzes the transformation of S-ribosylhomocysteine (RHC) to homocysteine (HC) and 4,5-dihydroxy-2,3-pentadione (DPD). This is S-ribosylhomocysteine lyase from Psychromonas ingrahamii (strain DSM 17664 / CCUG 51855 / 37).